The chain runs to 314 residues: Putative SET domain-containing protein L222 (314 aa).

The 150-residue stretch at 23–172 (EYIQVIYQNP…ANTEITISYG (150 aa)) folds into the SET domain.

This sequence belongs to the class V-like SAM-binding methyltransferase superfamily.

The sequence is that of Putative SET domain-containing protein L222 from Acanthamoeba polyphaga mimivirus (APMV).